Here is a 164-residue protein sequence, read N- to C-terminus: Lipoprotein signal peptidase (164 aa).

The next 4 membrane-spanning stretches (helical) occupy residues 6–26, 39–59, 65–85, and 88–108; these read LGVL…LWLL, VLPF…GWFS, GQIL…IWMA, and TTKL…GNAI. Residues aspartate 118 and aspartate 140 contribute to the active site. A helical membrane pass occupies residues 141-161; the sequence is VAIVVGVAALLYDSLIGLPAA.

The protein belongs to the peptidase A8 family.

It localises to the cell inner membrane. The catalysed reaction is Release of signal peptides from bacterial membrane prolipoproteins. Hydrolyzes -Xaa-Yaa-Zaa-|-(S,diacylglyceryl)Cys-, in which Xaa is hydrophobic (preferably Leu), and Yaa (Ala or Ser) and Zaa (Gly or Ala) have small, neutral side chains.. It functions in the pathway protein modification; lipoprotein biosynthesis (signal peptide cleavage). In terms of biological role, this protein specifically catalyzes the removal of signal peptides from prolipoproteins. This chain is Lipoprotein signal peptidase, found in Rhodopseudomonas palustris (strain ATCC BAA-98 / CGA009).